Here is a 73-residue protein sequence, read N- to C-terminus: Toxin Td3 (73 aa).

The first 7 residues, 1 to 7 (IGMVVEC), serve as a signal peptide directing secretion. Residues 8–70 (KDGYLMGPDG…VWERATNRCG (63 aa)) form the LCN-type CS-alpha/beta domain. 4 disulfides stabilise this stretch: cysteine 18–cysteine 69, cysteine 22–cysteine 44, cysteine 30–cysteine 50, and cysteine 34–cysteine 52. Lysine amide is present on lysine 71.

Belongs to the long (4 C-C) scorpion toxin superfamily. Sodium channel inhibitor family. Beta subfamily. As to expression, expressed by the venom gland.

Its subcellular location is the secreted. Its function is as follows. Beta toxins bind voltage-independently at site-4 of sodium channels (Nav) and shift the voltage of activation toward more negative potentials thereby affecting sodium channel activation and promoting spontaneous and repetitive firing. The protein is Toxin Td3 of Tityus discrepans (Venezuelan scorpion).